The chain runs to 513 residues: MKQLHVQKYLEKVRSRKQHFLYPLLFKEYIYAFAHDYGLNGSIFYEPTEILGNDNKSSSVLVKRLIIRMYQQNYLINSTNHSNQNRFLGHNNYFYSRFFSQMISESFAVIMEILFSLRLVSSSEKKEIPQFHNLRSIHSIFPFLEDKLSHLNSISDILIPHPIHLEILVQILQCRIQDVPSLHLLRFFLHEYHNWNSLITSKKSIYVFSKENKRLFRLLYNFYVFECEFVFVFLRKQSSYLQLTSFGTFLERIHFYGKIEHLLVVYRNFFNKTLWFFTDPFMHYVRYQGKAILASKGTHLFMKKWKCYLVNFWQYYFHFWSQPHRIHINQLSNYSFHFLGYLSSLLRNPLVVRNQMLENSYLIDTVMTKFDTIXPVDPLIGSLSKAKFXTLLGHPISKPIWTDLSDCDIIDRFGRICRXLSHYYSGSSKKRTLYRIKYILRFSCARTLARXHKSTVRTFMQRLGSVLLEEFFTEEEQVLSLIFPKTTPFSLHGSHRERIWYLDIIRINDLVNH.

This sequence belongs to the intron maturase 2 family. MatK subfamily.

It localises to the plastid. Its subcellular location is the chloroplast. Usually encoded in the trnK tRNA gene intron. Probably assists in splicing its own and other chloroplast group II introns. This Typha latifolia (Bulrush) protein is Maturase K.